We begin with the raw amino-acid sequence, 286 residues long: 3-methyl-2-oxobutanoate hydroxymethyltransferase (286 aa).

Residues Asp-51 and Asp-90 each coordinate Mg(2+). Residues 51 to 52, Asp-90, and Lys-120 contribute to the 3-methyl-2-oxobutanoate site; that span reads DS. Glu-122 serves as a coordination point for Mg(2+). Glu-189 (proton acceptor) is an active-site residue. A disordered region spans residues 263-286; the sequence is TFPGPSHVFSGSKASSDLNGGDES.

The protein belongs to the PanB family. As to quaternary structure, homodecamer; pentamer of dimers. The cofactor is Mg(2+).

It localises to the cytoplasm. The catalysed reaction is 3-methyl-2-oxobutanoate + (6R)-5,10-methylene-5,6,7,8-tetrahydrofolate + H2O = 2-dehydropantoate + (6S)-5,6,7,8-tetrahydrofolate. The protein operates within cofactor biosynthesis; (R)-pantothenate biosynthesis; (R)-pantoate from 3-methyl-2-oxobutanoate: step 1/2. Its function is as follows. Catalyzes the reversible reaction in which hydroxymethyl group from 5,10-methylenetetrahydrofolate is transferred onto alpha-ketoisovalerate to form ketopantoate. The polypeptide is 3-methyl-2-oxobutanoate hydroxymethyltransferase (Mesorhizobium japonicum (strain LMG 29417 / CECT 9101 / MAFF 303099) (Mesorhizobium loti (strain MAFF 303099))).